We begin with the raw amino-acid sequence, 231 residues long: Probable septum site-determining protein MinC (231 aa).

The segment at 102 to 125 is disordered; it reads KEKAPRPAPAPQAPAQNTTPVTKT.

This sequence belongs to the MinC family. As to quaternary structure, interacts with MinD and FtsZ.

Cell division inhibitor that blocks the formation of polar Z ring septums. Rapidly oscillates between the poles of the cell to destabilize FtsZ filaments that have formed before they mature into polar Z rings. Prevents FtsZ polymerization. The protein is Probable septum site-determining protein MinC of Escherichia coli O6:K15:H31 (strain 536 / UPEC).